Here is a 150-residue protein sequence, read N- to C-terminus: Transmembrane protein 35B (150 aa).

An N-terminal signal peptide occupies residues 1–21 (MSFRVGVLRVLLGVFFALTGA). The next 3 membrane-spanning stretches (helical) occupy residues 62 to 82 (TAVG…PPVL), 84 to 104 (EISN…LVVL), and 111 to 131 (YVPA…HFLA).

The protein belongs to the DoxX family.

It localises to the membrane. In Mus musculus (Mouse), this protein is Transmembrane protein 35B.